The sequence spans 196 residues: Guanylate kinase (196 aa).

Positions Arg-7–Leu-191 constitute a Guanylate kinase-like domain. Residue Gly-14–Gly-21 participates in ATP binding.

The protein belongs to the guanylate kinase family.

The protein resides in the cytoplasm. It carries out the reaction GMP + ATP = GDP + ADP. Its function is as follows. Essential for recycling GMP and indirectly, cGMP. This is Guanylate kinase from Mycoplasmopsis pulmonis (strain UAB CTIP) (Mycoplasma pulmonis).